An 862-amino-acid chain; its full sequence is Interleukin-12 receptor subunit beta-2 (862 aa).

The first 23 residues, 1 to 23 (MAHTFRGCSLAFMFIITWLLIKA), serve as a signal peptide directing secretion. Residues 24-622 (KIDACKRGDV…REFCLQGKAN (599 aa)) lie on the Extracellular side of the membrane. 5 N-linked (GlcNAc...) asparagine glycosylation sites follow: Asn48, Asn129, Asn166, Asn195, and Asn271. 5 Fibronectin type-III domains span residues 126-221 (QPQN…FLDI), 226-319 (PPWD…TPEE), 320-419 (EPTG…LCEA), 423-520 (APRQ…KHKA), and 521-620 (PLSG…LQGK). The WSXWS motif motif lies at 305–309 (WSDWS). 3 N-linked (GlcNAc...) asparagine glycosylation sites follow: Asn347, Asn376, and Asn480. Residues 623–643 (WMAFVAPSICIAIIMVGIFST) form a helical membrane-spanning segment. The Cytoplasmic segment spans residues 644 to 862 (HYFQQKVFVL…LKMRCDSLML (219 aa)). Positions 662–670 (CSREIPDPA) match the Box 1 motif motif. Residues 725-755 (NWPQREKGIQGHQASEKDMMHSASSPPPPRA) are disordered. The span at 728–744 (QREKGIQGHQASEKDMM) shows a compositional bias: basic and acidic residues. Residues 796-801 (THDGYL) are required for STAT4 binding. The residue at position 800 (Tyr800) is a Phosphotyrosine.

It belongs to the type I cytokine receptor family. Type 2 subfamily. As to quaternary structure, heterodimer/heterooligomer; disulfide-linked. The functional high affinity IL12 receptor is composed of I12RB1 and IL12RB2. Il12RB2 binds JAK2 (via its N-terminal) through a membrane-proximal region of the cytoplasmic domain. Interaction, in vitro and in vivo, with SOCS3 (via its SH2 domain) inhibits the STAT4-mediated activation. Binds STAT4 through a membrane-distal C-terminal region. In terms of processing, on IL12 binding, phosphorylated on C-terminal tyrosine residues by JAK2. Phosphorylation on Tyr-800 is required for STAT4 binding and activation, and for SOCS3 binding. Isoform 2 is expressed at similar levels in both naive and activated T-cells.

The protein resides in the membrane. In terms of biological role, receptor for interleukin-12. This subunit is the signaling component coupling to the JAK2/STAT4 pathway. Promotes the proliferation of T-cells as well as NK cells. Induces the promotion of T-cells towards the Th1 phenotype by strongly enhancing IFN-gamma production. This Homo sapiens (Human) protein is Interleukin-12 receptor subunit beta-2 (IL12RB2).